Here is a 289-residue protein sequence, read N- to C-terminus: Somatostatin-like receptor F_48D10.1 (289 aa).

Residues 1 to 57 (MEPLDQTPGFPLSPEPNYWYETTPSLLLVSYPHLLDISSNQSTQSVPFQGSSALLTA) lie on the Extracellular side of the membrane. N-linked (GlcNAc...) asparagine glycosylation is present at Asn40. The chain crosses the membrane as a helical span at residues 58 to 79 (VIYITVFVVGLTGNTLAIYVVL). The Cytoplasmic segment spans residues 80-89 (RYAGMKTVTN). A helical membrane pass occupies residues 90-110 (IYILNLAVADELYIVGLPFLA). The Extracellular segment spans residues 111–126 (TQNVLSYWPFGSFLCR). Cys125 and Cys221 are oxidised to a cystine. A helical membrane pass occupies residues 127-148 (VVMTADSMNQFTSIFCLTVMSI). Topologically, residues 149-170 (DRYLAVVHPIRSTKWRHPRVAK) are cytoplasmic. Residues 171 to 191 (VVSAAVWAVSFVVVLPVVIFS) form a helical membrane-spanning segment. Topologically, residues 192–240 (DVQVRPSRPLQVGTSSKCLVKRVQETFNSCNMIWPEPKNVWSTAFILYT) are extracellular. Residues 241-261 (AMVGFFGPLLIICLCYLLIVI) traverse the membrane as a helical segment. The Cytoplasmic segment spans residues 262 to 289 (KVRHRMSAAQVGAVVSTCPLNICCLSRR).

The protein belongs to the G-protein coupled receptor 1 family.

Its subcellular location is the cell membrane. In Takifugu rubripes (Japanese pufferfish), this protein is Somatostatin-like receptor F_48D10.1.